The primary structure comprises 480 residues: MTLILYNTLSRREEPFTPLIPGIVSMYCCGITVYDYCHLGHARTCVVWDVVRRYLEYLGYKVRYIQNFTDIDDKILNRAKNEHTTMAAVAERFIEAYFEDMAKLGVRPADAYPRATHTLDGIKRLVYELEQKGYAYPSDGDVYYSVRRFSDYGKLSGRKLDDLQAGASGRVETDDPEAIKKQDPFDFALWKGAKSGEPSWDSPWGQGRPGWHIECSAMVKEQLGETIDIHVGGSDLIFPHHENEIAQSEAATGKPLAHYWLHNGMVKVAGEKMSKSLGNFITIRELLAKYDPLAVRLLILGAQYRKPIDFSDEGLQAATNGWHTLQEGLSFGYKHLPPDNPAITDQELENRFQEAVNHDFNFAGGLAVLFEIAKELRKEGNNLTHAGKTDSNLAQLAVKWHTLVKLSRVLGLEMAADQGETPVSEGISAADIENLIQQRTEAKKAKNYAESDRIRAELKAQGITLIDQPGGVTKWLREGD.

Cysteine 29 provides a ligand contact to Zn(2+). Positions 31-41 (ITVYDYCHLGH) match the 'HIGH' region motif. Zn(2+) contacts are provided by cysteine 215, histidine 240, and glutamate 244. Positions 272–276 (KMSKS) match the 'KMSKS' region motif. Position 275 (lysine 275) interacts with ATP.

It belongs to the class-I aminoacyl-tRNA synthetase family. Monomer. Zn(2+) is required as a cofactor.

It localises to the cytoplasm. It carries out the reaction tRNA(Cys) + L-cysteine + ATP = L-cysteinyl-tRNA(Cys) + AMP + diphosphate. The sequence is that of Cysteine--tRNA ligase from Microcystis aeruginosa (strain NIES-843 / IAM M-2473).